Consider the following 398-residue polypeptide: Tyrosine--tRNA ligase (398 aa).

Residues 48–57 carry the 'HIGH' region motif; the sequence is PTGADIHLGH. Positions 235-239 match the 'KMSKS' region motif; that stretch reads KMSKS. Residue Lys-238 coordinates ATP. The S4 RNA-binding domain occupies 334–398; the sequence is VKLAYLLGAT…GKNKFVRLVL (65 aa).

The protein belongs to the class-I aminoacyl-tRNA synthetase family. TyrS type 2 subfamily. Homodimer.

Its subcellular location is the cytoplasm. It catalyses the reaction tRNA(Tyr) + L-tyrosine + ATP = L-tyrosyl-tRNA(Tyr) + AMP + diphosphate + H(+). In terms of biological role, catalyzes the attachment of tyrosine to tRNA(Tyr) in a two-step reaction: tyrosine is first activated by ATP to form Tyr-AMP and then transferred to the acceptor end of tRNA(Tyr). This chain is Tyrosine--tRNA ligase, found in Trichormus variabilis (strain ATCC 29413 / PCC 7937) (Anabaena variabilis).